Here is an 88-residue protein sequence, read N- to C-terminus: Translation initiation factor IF-1 1 (88 aa).

Residues 1-72 (MSKEDMIELE…TKGRINFRHP (72 aa)) enclose the S1-like domain. Residues 66-88 (RINFRHPTANPGAGPRPSHHHRR) are disordered.

This sequence belongs to the IF-1 family. In terms of assembly, component of the 30S ribosomal translation pre-initiation complex which assembles on the 30S ribosome in the order IF-2 and IF-3, IF-1 and N-formylmethionyl-tRNA(fMet); mRNA recruitment can occur at any time during PIC assembly.

It is found in the cytoplasm. One of the essential components for the initiation of protein synthesis. Stabilizes the binding of IF-2 and IF-3 on the 30S subunit to which N-formylmethionyl-tRNA(fMet) subsequently binds. Helps modulate mRNA selection, yielding the 30S pre-initiation complex (PIC). Upon addition of the 50S ribosomal subunit IF-1, IF-2 and IF-3 are released leaving the mature 70S translation initiation complex. The sequence is that of Translation initiation factor IF-1 1 from Chromobacterium violaceum (strain ATCC 12472 / DSM 30191 / JCM 1249 / CCUG 213 / NBRC 12614 / NCIMB 9131 / NCTC 9757 / MK).